The sequence spans 322 residues: Aldo-keto reductase family 1 member C23 (322 aa).

20-24 is an NADP(+) binding site; it reads GFGTY. Lysine 31 is a binding site for substrate. Aspartate 50 lines the NADP(+) pocket. Tyrosine 55 serves as the catalytic Proton donor. Histidine 117 is a binding site for substrate. Residues 166-167, glutamine 190, 216-221, and 269-279 each bind NADP(+); these read SN, YSALGS, and KSYNEKRIKEN.

It belongs to the aldo/keto reductase family. In terms of assembly, monomer. In terms of tissue distribution, detected in follicle granulosa cells (at protein level). Detected in heart, lung, liver, kidney, stomach, uterus, testis, skeletal muscle and granulosa cells of the follicle wall.

The protein resides in the cytoplasm. NADP-dependent oxidoreductase that has 20-alpha-hydroxysteroid dehydrogenase activity. The sequence is that of Aldo-keto reductase family 1 member C23 (AKR1C23) from Equus caballus (Horse).